A 476-amino-acid polypeptide reads, in one-letter code: Lactate utilization protein B (476 aa).

4Fe-4S ferredoxin-type domains follow at residues 304–334 and 353–382; these read GTEF…GHSY and YDEY…LHEL. Cysteine 313, cysteine 316, cysteine 319, cysteine 323, cysteine 366, cysteine 369, and cysteine 373 together coordinate [4Fe-4S] cluster.

This sequence belongs to the LutB/YkgF family.

Its function is as follows. Is involved in L-lactate degradation and allows cells to grow with lactate as the sole carbon source. Has probably a role as an electron transporter during oxidation of L-lactate. This is Lactate utilization protein B from Bacillus velezensis (strain DSM 23117 / BGSC 10A6 / LMG 26770 / FZB42) (Bacillus amyloliquefaciens subsp. plantarum).